A 309-amino-acid polypeptide reads, in one-letter code: Aspartate carbamoyltransferase catalytic subunit (309 aa).

Carbamoyl phosphate contacts are provided by Arg-49 and Thr-50. Lys-77 serves as a coordination point for L-aspartate. Residues Arg-99, His-127, and Gln-130 each contribute to the carbamoyl phosphate site. 2 residues coordinate L-aspartate: Arg-160 and Arg-211. Carbamoyl phosphate contacts are provided by Ala-252 and Pro-253.

It belongs to the aspartate/ornithine carbamoyltransferase superfamily. ATCase family. As to quaternary structure, heterododecamer (2C3:3R2) of six catalytic PyrB chains organized as two trimers (C3), and six regulatory PyrI chains organized as three dimers (R2).

The catalysed reaction is carbamoyl phosphate + L-aspartate = N-carbamoyl-L-aspartate + phosphate + H(+). Its pathway is pyrimidine metabolism; UMP biosynthesis via de novo pathway; (S)-dihydroorotate from bicarbonate: step 2/3. Its function is as follows. Catalyzes the condensation of carbamoyl phosphate and aspartate to form carbamoyl aspartate and inorganic phosphate, the committed step in the de novo pyrimidine nucleotide biosynthesis pathway. The chain is Aspartate carbamoyltransferase catalytic subunit from Geobacillus sp. (strain WCH70).